Reading from the N-terminus, the 61-residue chain is Small ribosomal subunit protein uS14 (61 aa).

Zn(2+)-binding residues include Cys24, Cys27, Cys40, and Cys43.

Belongs to the universal ribosomal protein uS14 family. Zinc-binding uS14 subfamily. As to quaternary structure, part of the 30S ribosomal subunit. Contacts proteins S3 and S10. It depends on Zn(2+) as a cofactor.

Its function is as follows. Binds 16S rRNA, required for the assembly of 30S particles and may also be responsible for determining the conformation of the 16S rRNA at the A site. This chain is Small ribosomal subunit protein uS14, found in Petrotoga mobilis (strain DSM 10674 / SJ95).